The sequence spans 85 residues: Toxin CsE8 (85 aa).

A signal peptide spans 1–19; that stretch reads MNSLLMITACLVLFGTVWS. In terms of domain architecture, LCN-type CS-alpha/beta spans 20 to 83; that stretch reads EKGYLVHEDT…TWPLIGKLCG (64 aa). 4 disulfide bridges follow: C31/C82, C35/C58, C44/C63, and C48/C65. The residue at position 82 (C82) is a Cysteine amide.

It belongs to the long (4 C-C) scorpion toxin superfamily. Sodium channel inhibitor family. Beta subfamily. In terms of tissue distribution, expressed by the venom gland.

It is found in the secreted. Its function is as follows. Beta toxins bind voltage-independently at site-4 of sodium channels (Nav) and shift the voltage of activation toward more negative potentials thereby affecting sodium channel activation and promoting spontaneous and repetitive firing. This is Toxin CsE8 from Centruroides sculpturatus (Arizona bark scorpion).